Reading from the N-terminus, the 618-residue chain is Leucine aminopeptidase 2 (618 aa).

A peptide-binding positions include 140 to 142 and 272 to 277; these read QCQ and PYGGME. His301 provides a ligand contact to Zn(2+). Residue Glu302 is the Proton acceptor of the active site. Residues His305 and Glu324 each contribute to the Zn(2+) site. The Proton donor role is filled by Tyr389.

This sequence belongs to the peptidase M1 family. Requires Zn(2+) as cofactor.

It localises to the cytoplasm. The protein localises to the nucleus. It catalyses the reaction an epoxide + H2O = an ethanediol. Functionally, aminopeptidase that preferentially cleaves di- and tripeptides. Also has low epoxide hydrolase activity (in vitro). Can hydrolyze the epoxide leukotriene LTA(4) but it forms preferentially 5,6-dihydroxy-7,9,11,14-eicosatetraenoic acid rather than the cytokine leukotriene B(4) as the product compared to the homologous mammalian enzyme (in vitro). This Emericella nidulans (strain FGSC A4 / ATCC 38163 / CBS 112.46 / NRRL 194 / M139) (Aspergillus nidulans) protein is Leucine aminopeptidase 2.